The chain runs to 537 residues: Cytochrome P450 4F6 (537 aa).

Heme is bound at residue C468.

It belongs to the cytochrome P450 family. The cofactor is heme. As to expression, high expression in liver and kidney. Lower expression in brain.

Its subcellular location is the endoplasmic reticulum membrane. The protein resides in the microsome membrane. The catalysed reaction is an organic molecule + reduced [NADPH--hemoprotein reductase] + O2 = an alcohol + oxidized [NADPH--hemoprotein reductase] + H2O + H(+). The sequence is that of Cytochrome P450 4F6 (Cyp4f6) from Rattus norvegicus (Rat).